A 156-amino-acid polypeptide reads, in one-letter code: MAKRKDNKTLAENRKARHDYFVDEAMEAGIALVGTEVKSIRNGRVNLKDCYADINNGEIFINNMHISPYEQGNIFNVDPLRKRKLLLHKSEIQRLIGIVQQQGVALIPLSLYLKNGRVKVNLGVCRGKKNYDKRDTMLEKAHKREMDRQLKERNRY.

The protein belongs to the SmpB family.

The protein localises to the cytoplasm. Its function is as follows. Required for rescue of stalled ribosomes mediated by trans-translation. Binds to transfer-messenger RNA (tmRNA), required for stable association of tmRNA with ribosomes. tmRNA and SmpB together mimic tRNA shape, replacing the anticodon stem-loop with SmpB. tmRNA is encoded by the ssrA gene; the 2 termini fold to resemble tRNA(Ala) and it encodes a 'tag peptide', a short internal open reading frame. During trans-translation Ala-aminoacylated tmRNA acts like a tRNA, entering the A-site of stalled ribosomes, displacing the stalled mRNA. The ribosome then switches to translate the ORF on the tmRNA; the nascent peptide is terminated with the 'tag peptide' encoded by the tmRNA and targeted for degradation. The ribosome is freed to recommence translation, which seems to be the essential function of trans-translation. The polypeptide is SsrA-binding protein (Clostridium perfringens (strain 13 / Type A)).